The following is an 81-amino-acid chain: Sulfur carrier protein TusA (81 aa).

The Cysteine persulfide intermediate role is filled by Cys19.

It belongs to the sulfur carrier protein TusA family. In terms of assembly, interacts with IscS.

The protein resides in the cytoplasm. It functions in the pathway tRNA modification. Sulfur carrier protein involved in sulfur trafficking in the cell. Part of a sulfur-relay system required for 2-thiolation during synthesis of 2-thiouridine of the modified wobble base 5-methylaminomethyl-2-thiouridine (mnm(5)s(2)U) in tRNA. Interacts with IscS and stimulates its cysteine desulfurase activity. Accepts an activated sulfur from IscS, which is then transferred to TusD, and thus determines the direction of sulfur flow from IscS to 2-thiouridine formation. Also appears to be involved in sulfur transfer for the biosynthesis of molybdopterin. The sequence is that of Sulfur carrier protein TusA from Pectobacterium atrosepticum (strain SCRI 1043 / ATCC BAA-672) (Erwinia carotovora subsp. atroseptica).